The chain runs to 437 residues: UDP-N-acetylmuramate--L-alanine ligase (437 aa).

Residue 108 to 114 (GAHGKTS) participates in ATP binding.

This sequence belongs to the MurCDEF family.

Its subcellular location is the cytoplasm. It catalyses the reaction UDP-N-acetyl-alpha-D-muramate + L-alanine + ATP = UDP-N-acetyl-alpha-D-muramoyl-L-alanine + ADP + phosphate + H(+). It functions in the pathway cell wall biogenesis; peptidoglycan biosynthesis. Its function is as follows. Cell wall formation. This is UDP-N-acetylmuramate--L-alanine ligase from Staphylococcus aureus (strain COL).